We begin with the raw amino-acid sequence, 445 residues long: MALVDKHKVKRQRLDRICEGIRPQIMNGPLHPRPLVALLDGRDCTVEMPILKDLATVAFCDAQSTQEIHEKVLNEAVGAMMYHTITLTREDLEKFKALRVIVRIGSGYDNVDIKAAGELGIAVCNIPSAAVEETADSTVCHILNLYRRNTWLYQALREGTRVQSVEQIREVASGAARIRGETLGLIGFGRTGQAVAVRAKAFGFSVIFYDPYLQDGIERSLGVQRVYTLQDLLYQSDCVSLHCNLNEHNHHLINDFTIKQMRQGAFLVNAARGGLVDEKALAQALKEGRIRGAALDVHESEPFSFAQGPLKDAPNLICTPHTAWYSEQASLEMREAAATEIRRAITGRIPESLRNCVNKEFFVTSAPWSVIDQQAIHPELNGATYRYPPGIVGVAPGGLPPAMEGIIPGGIPVTHNLPTVAHPSQAPSPNQPTKHGDNREHPNEQ.

Residue R22 is modified to Asymmetric dimethylarginine. NAD(+)-binding positions include S106, I186 to T191, D210, C243 to N249, A270 to R272, and D296. R272 is an active-site residue. E301 is an active-site residue. The Proton donor role is filled by H321. Residue H321–W324 participates in NAD(+) binding. Residues T414 to Q445 are disordered. S428 carries the phosphoserine; by HIPK2 modification. The span at K434–Q445 shows a compositional bias: basic and acidic residues.

Belongs to the D-isomer specific 2-hydroxyacid dehydrogenase family. As to quaternary structure, interacts with HIPK2 and PNN. Interacts with the transcription factors ZNF217, BKLF, delta EF1/AREB6/ZEB, EVI-1 and Friend of GATA (FOG) via the consensus motif P-X-[DNS]-L-[STVA]. Also interacts with the C-terminus of adenovirus E1A protein. Can form a complex with BKLF on a CACCC-box oligonucleotide. Can form homodimers or heterodimers of CTBP1 and CTBP2. Interacts with NRIP1 and WIZ. Interacts with PRDM16; represses white adipose tissue (WAT)-specific genes expression. Interacts with MCRIP1. Post-translationally, phosphorylation by HIPK2 on Ser-428 induces proteasomal degradation. As to expression, found in all tissues except spleen and liver.

Its subcellular location is the nucleus. It is found in the synapse. Its function is as follows. Corepressor targeting diverse transcription regulators. Isoform 2 probably acts as a scaffold for specialized synapses. Functions in brown adipose tissue (BAT) differentiation. The chain is C-terminal-binding protein 2 (Ctbp2) from Mus musculus (Mouse).